Here is a 458-residue protein sequence, read N- to C-terminus: ATP synthase subunit beta (458 aa).

148-155 (GGAGVGKT) lines the ATP pocket.

It belongs to the ATPase alpha/beta chains family. As to quaternary structure, F-type ATPases have 2 components, CF(1) - the catalytic core - and CF(0) - the membrane proton channel. CF(1) has five subunits: alpha(3), beta(3), gamma(1), delta(1), epsilon(1). CF(0) has three main subunits: a(1), b(2) and c(9-12). The alpha and beta chains form an alternating ring which encloses part of the gamma chain. CF(1) is attached to CF(0) by a central stalk formed by the gamma and epsilon chains, while a peripheral stalk is formed by the delta and b chains.

The protein localises to the cell inner membrane. The catalysed reaction is ATP + H2O + 4 H(+)(in) = ADP + phosphate + 5 H(+)(out). Its function is as follows. Produces ATP from ADP in the presence of a proton gradient across the membrane. The catalytic sites are hosted primarily by the beta subunits. The protein is ATP synthase subunit beta of Pseudomonas entomophila (strain L48).